Consider the following 258-residue polypeptide: Acyl-[acyl-carrier-protein]--UDP-N-acetylglucosamine O-acyltransferase (258 aa).

Belongs to the transferase hexapeptide repeat family. LpxA subfamily. Homotrimer.

The protein localises to the cytoplasm. The catalysed reaction is a (3R)-hydroxyacyl-[ACP] + UDP-N-acetyl-alpha-D-glucosamine = a UDP-3-O-[(3R)-3-hydroxyacyl]-N-acetyl-alpha-D-glucosamine + holo-[ACP]. The protein operates within glycolipid biosynthesis; lipid IV(A) biosynthesis; lipid IV(A) from (3R)-3-hydroxytetradecanoyl-[acyl-carrier-protein] and UDP-N-acetyl-alpha-D-glucosamine: step 1/6. Involved in the biosynthesis of lipid A, a phosphorylated glycolipid that anchors the lipopolysaccharide to the outer membrane of the cell. In Stutzerimonas stutzeri (strain A1501) (Pseudomonas stutzeri), this protein is Acyl-[acyl-carrier-protein]--UDP-N-acetylglucosamine O-acyltransferase.